We begin with the raw amino-acid sequence, 341 residues long: L-threonine 3-dehydrogenase (341 aa).

C38 provides a ligand contact to Zn(2+). Catalysis depends on charge relay system residues T40 and H43. The Zn(2+) site is built by H63, E64, C93, C96, C99, and C107. NAD(+) is bound by residues I175, D195, R200, 262–264 (LGI), and 286–287 (IY).

This sequence belongs to the zinc-containing alcohol dehydrogenase family. In terms of assembly, homotetramer. It depends on Zn(2+) as a cofactor.

Its subcellular location is the cytoplasm. The enzyme catalyses L-threonine + NAD(+) = (2S)-2-amino-3-oxobutanoate + NADH + H(+). It participates in amino-acid degradation; L-threonine degradation via oxydo-reductase pathway; glycine from L-threonine: step 1/2. Its function is as follows. Catalyzes the NAD(+)-dependent oxidation of L-threonine to 2-amino-3-ketobutyrate. This Yersinia enterocolitica serotype O:8 / biotype 1B (strain NCTC 13174 / 8081) protein is L-threonine 3-dehydrogenase.